Consider the following 151-residue polypeptide: Deoxyuridine 5'-triphosphate nucleotidohydrolase (151 aa).

Substrate contacts are provided by residues 70-72 (RSG), asparagine 83, 87-89 (LID), and methionine 97.

Belongs to the dUTPase family. The cofactor is Mg(2+).

It catalyses the reaction dUTP + H2O = dUMP + diphosphate + H(+). The protein operates within pyrimidine metabolism; dUMP biosynthesis; dUMP from dCTP (dUTP route): step 2/2. This enzyme is involved in nucleotide metabolism: it produces dUMP, the immediate precursor of thymidine nucleotides and it decreases the intracellular concentration of dUTP so that uracil cannot be incorporated into DNA. This chain is Deoxyuridine 5'-triphosphate nucleotidohydrolase, found in Pseudomonas aeruginosa (strain LESB58).